A 138-amino-acid polypeptide reads, in one-letter code: Acidic phospholipase A2 CH-E6' (138 aa).

Positions 1–16 (MRTLWIVAVLLLGVEG) are cleaved as a signal peptide. Disulfide bonds link C42–C131, C44–C60, C59–C111, C65–C138, C66–C104, C73–C97, and C91–C102. Ca(2+) is bound by residues Y43, G45, and G47. H63 is a catalytic residue. D64 lines the Ca(2+) pocket. D105 is a catalytic residue.

This sequence belongs to the phospholipase A2 family. Group II subfamily. D49 sub-subfamily. Ca(2+) is required as a cofactor. As to expression, expressed by the venom gland.

The protein localises to the secreted. The enzyme catalyses a 1,2-diacyl-sn-glycero-3-phosphocholine + H2O = a 1-acyl-sn-glycero-3-phosphocholine + a fatty acid + H(+). Snake venom phospholipase A2 (PLA2) that shows high lipolytic and weak ADP-induced platelet aggregation activities. Also shows weak anticoagulant activity. PLA2 catalyzes the calcium-dependent hydrolysis of the 2-acyl groups in 3-sn-phosphoglycerides. This is Acidic phospholipase A2 CH-E6' from Crotalus horridus (Timber rattlesnake).